The following is a 596-amino-acid chain: Estrogen receptor (596 aa).

The tract at residues 1–185 (MTMTLHTKAS…AMESAKETRY (185 aa)) is modulating (transactivation AF-1); mediates interaction with MACROD1. The O-linked (GlcNAc) serine glycan is linked to Ser-10. Residues 36–48 (ERPLGEVYMDSSK) form a required for interaction with NCOA1 region. The interval 36–175 (ERPLGEVYMD…LASTSDKGSM (140 aa)) is interaction with DDX5; self-association. Ser-104 and Ser-106 each carry phosphoserine; by CDK2. Residue Ser-119 is modified to Phosphoserine. Positions 144 to 175 (EAGPPAYYRPNSDNRRQGGRERLASTSDKGSM) are disordered. The segment covering 155–166 (SDNRRQGGRERL) has biased composition (basic and acidic residues). Ser-168 carries the phosphoserine; by CK2 modification. 2 NR C4-type zinc fingers span residues 186 to 206 (CAVCNDYASGYHYGVWSCEGC) and 222 to 246 (CPATNQCTIDKNRRKSCQACRLRKC). A DNA-binding region (nuclear receptor) is located at residues 186–251 (CAVCNDYASG…RLRKCYEVGM (66 aa)). The interval 186–311 (CAVCNDYASG…TKKNSPVLSL (126 aa)) is mediates interaction with DNTTIP2. The segment at 252–311 (MKGGIRKDRRGGRMLKHKRQRDDGEGRNEAVPSGDMRAANLWPSPIMIKHTKKNSPVLSL) is hinge. The span at 259 to 270 (DRRGGRMLKHKR) shows a compositional bias: basic residues. Positions 259–285 (DRRGGRMLKHKRQRDDGEGRNEAVPSG) are disordered. Arg-261 is subject to Asymmetric dimethylarginine; by PRMT1. An interaction with AKAP13 region spans residues 263–596 (GRMLKHKRQR…GEAENFPSTV (334 aa)). The tract at residues 265–595 (MLKHKRQRDD…TGEAENFPST (331 aa)) is self-association. Residues 312 to 548 (TADQMISALL…DLLLEMLDAH (237 aa)) form the NR LBD domain. Positions 312-595 (TADQMISALL…TGEAENFPST (284 aa)) are transactivation AF-2. 17beta-estradiol is bound by residues Glu-354 and Arg-395. Cys-448 carries the S-palmitoyl cysteine lipid modification. His-525 contributes to the 17beta-estradiol binding site. Phosphotyrosine; by Tyr-kinases is present on Tyr-538. The O-linked (GlcNAc) threonine glycan is linked to Thr-572.

The protein belongs to the nuclear hormone receptor family. NR3 subfamily. Binds DNA as a homodimer. Can form a heterodimer with ESR2. Interacts with coactivator NCOA5. Interacts with PELP1, the interaction is enhanced by 17-beta-estradiol; the interaction increases ESR1 transcriptional activity. Interacts with NCOA7; the interaction is ligand-inducible. Interacts with AKAP13, CUEDC2, HEXIM1, KDM5A, MAP1S, SMARD1, and UBE1C. Interacts with MUC1; the interaction is stimulated by 7 beta-estradiol (E2) and enhances ESR1-mediated transcription. Interacts with DNTTIP2, and UIMC1. Interacts with KMT2D/MLL2. Interacts with ATAD2; the interaction is enhanced by estradiol. Interacts with KIF18A and LDB1. Interacts with RLIM (via its C-terminus). Interacts with MACROD1. Interacts with SH2D4A and PLCG. Interacts with SH2D4A; the interaction blocks binding to PLCG and inhibits estrogen-induced cell proliferation. Interacts with DYNLL1. Interacts with CCDC62; the interaction requires estradiol and appears to enhance the transcription of target genes. Interacts with NR2C1; the interaction prevents homodimerization of ESR1 and suppresses its transcriptional activity and cell growth. Interacts with DNAAF4. Interacts with PRMT2. Interacts with RBFOX2. Interacts with EP300; the interaction is estrogen-dependent and enhanced by CITED1. Interacts with CITED1; the interaction is estrogen-dependent. Interacts with FAM120B, FOXL2, PHB2 and SLC30A9. Interacts with coactivators NCOA3 and NCOA6. Interacts with STK3/MST2 only in the presence of SAV1 and vice-versa. Binds to CSNK1D. Interacts with NCOA2; NCOA2 can interact with ESR1 AF-1 and AF-2 domains simultaneously and mediate their transcriptional synergy. Interacts with DDX5. Interacts with NCOA1; the interaction seems to require a self-association of N-terminal and C-terminal regions. Interacts with ZNF366, DDX17, NFKB1, RELA, SP1 and SP3. Interacts with NRIP1. Interacts with GPER1; the interaction occurs in an estrogen-dependent manner. Interacts with CLOCK and the interaction is stimulated by estrogen. Interacts with TRIP4 (ufmylated); estrogen dependent. Interacts with LMTK3; the interaction phosphorylates ESR1 (in vitro) and protects it against proteasomal degradation. Interacts with CCAR2 (via N-terminus) in a ligand-independent manner. Interacts with ZFHX3. Interacts with SFR1 in a ligand-dependent and -independent manner. Interacts with DCAF13, LATS1 and DCAF1; regulates ESR1 ubiquitination and ubiquitin-mediated proteasomal degradation. Interacts (via DNA-binding domain) with POU4F2 (C-terminus); this interaction increases the estrogen receptor ESR1 transcriptional activity in a DNA- and ligand 17-beta-estradiol-independent manner. Interacts with ESRRB isoform 1. Interacts with UBE3A and WBP2. Interacts with GTF2B. Interacts with RBM39. In the absence of hormonal ligand, interacts with TACC1. Interacts with PI3KR1 or PI3KR2 and PTK2/FAK1. Interacts with SRC. Interacts with BAG1; the interaction is promoted in the absence of estradiol (17-beta-estradiol/E2). Interacts with and ubiquitinated by STUB1; the interaction is promoted in the absence of estradiol (17-beta-estradiol/E2). Interacts with NEDD8. Glycosylated; contains N-acetylglucosamine, probably O-linked. In terms of processing, ubiquitinated; regulated by LATS1 via DCAF1 it leads to ESR1 proteasomal degradation. Deubiquitinated by OTUB1. Ubiquitinated by STUB1/CHIP; in the CA1 hippocampal region following loss of endogenous circulating estradiol (17-beta-estradiol/E2). Ubiquitinated by UBR5, leading to its degradation: UBR5 specifically recognizes and binds ligand-bound ESR1 when it is not associated with coactivators (NCOAs). In presence of NCOAs, the UBR5-degron is not accessible, preventing its ubiquitination and degradation. Post-translationally, phosphorylated by cyclin A/CDK2 and CK1. Phosphorylation probably enhances transcriptional activity. Dephosphorylation at Ser-119 by PPP5C inhibits its transactivation activity. Phosphorylated by LMTK3 (in vitro). Palmitoylated at Cys-448 by ZDHHC7 and ZDHHC21. Palmitoylation is required for plasma membrane targeting and for rapid intracellular signaling via ERK and AKT kinases and cAMP generation, but not for signaling mediated by the nuclear hormone receptor. In terms of processing, dimethylated by PRMT1 at Arg-261. The methylation may favor cytoplasmic localization. Demethylated by JMJD6 at Arg-261.

It is found in the nucleus. It localises to the cytoplasm. Its subcellular location is the golgi apparatus. The protein resides in the cell membrane. Its function is as follows. Nuclear hormone receptor. The steroid hormones and their receptors are involved in the regulation of eukaryotic gene expression and affect cellular proliferation and differentiation in target tissues. Ligand-dependent nuclear transactivation involves either direct homodimer binding to a palindromic estrogen response element (ERE) sequence or association with other DNA-binding transcription factors, such as AP-1/c-Jun, c-Fos, ATF-2, Sp1 and Sp3, to mediate ERE-independent signaling. Ligand binding induces a conformational change allowing subsequent or combinatorial association with multiprotein coactivator complexes through LXXLL motifs of their respective components. Mutual transrepression occurs between the estrogen receptor (ER) and NF-kappa-B in a cell-type specific manner. Decreases NF-kappa-B DNA-binding activity and inhibits NF-kappa-B-mediated transcription from the IL6 promoter and displace RELA/p65 and associated coregulators from the promoter. Recruited to the NF-kappa-B response element of the CCL2 and IL8 promoters and can displace CREBBP. Present with NF-kappa-B components RELA/p65 and NFKB1/p50 on ERE sequences. Can also act synergistically with NF-kappa-B to activate transcription involving respective recruitment adjacent response elements; the function involves CREBBP. Can activate the transcriptional activity of TFF1. Also mediates membrane-initiated estrogen signaling involving various kinase cascades. Essential for MTA1-mediated transcriptional regulation of BRCA1 and BCAS3. Maintains neuronal survival in response to ischemic reperfusion injury when in the presence of circulating estradiol (17-beta-estradiol/E2). The sequence is that of Estrogen receptor (ESR1) from Bos taurus (Bovine).